The chain runs to 424 residues: Argininosuccinate synthase (424 aa).

ATP contacts are provided by residues 9–17 (AYSGGLDTS) and Ala35. L-citrulline-binding residues include Tyr86 and Ser91. An ATP-binding site is contributed by 114–122 (SHGATGKGN). 3 residues coordinate L-aspartate: Thr118, Asn122, and Asp123. Asn122 contacts L-citrulline. Residues Arg126, Ser179, Ser188, Glu269, and Tyr281 each coordinate L-citrulline.

The protein belongs to the argininosuccinate synthase family. Homotetramer.

It carries out the reaction L-citrulline + L-aspartate + ATP = 2-(N(omega)-L-arginino)succinate + AMP + diphosphate + H(+). It participates in amino-acid biosynthesis; L-arginine biosynthesis; L-arginine from L-ornithine and carbamoyl phosphate: step 2/3. The protein operates within nitrogen metabolism; urea cycle; (N(omega)-L-arginino)succinate from L-aspartate and L-citrulline: step 1/1. This chain is Argininosuccinate synthase, found in Anopheles gambiae (African malaria mosquito).